The chain runs to 244 residues: Phosphoadenosine 5'-phosphosulfate reductase (244 aa).

Cys-239 serves as the catalytic Nucleophile; cysteine thiosulfonate intermediate.

It belongs to the PAPS reductase family. CysH subfamily.

It localises to the cytoplasm. It catalyses the reaction [thioredoxin]-disulfide + sulfite + adenosine 3',5'-bisphosphate + 2 H(+) = [thioredoxin]-dithiol + 3'-phosphoadenylyl sulfate. It participates in sulfur metabolism; hydrogen sulfide biosynthesis; sulfite from sulfate: step 3/3. Functionally, catalyzes the formation of sulfite from phosphoadenosine 5'-phosphosulfate (PAPS) using thioredoxin as an electron donor. This is Phosphoadenosine 5'-phosphosulfate reductase from Escherichia coli (strain K12 / MC4100 / BW2952).